The primary structure comprises 355 residues: UDP-N-acetylglucosamine--N-acetylmuramyl-(pentapeptide) pyrophosphoryl-undecaprenol N-acetylglucosamine transferase (355 aa).

Residues 13–15, N125, R162, S190, I244, and Q289 each bind UDP-N-acetyl-alpha-D-glucosamine; that span reads TGG.

The protein belongs to the glycosyltransferase 28 family. MurG subfamily.

It is found in the cell inner membrane. The catalysed reaction is di-trans,octa-cis-undecaprenyl diphospho-N-acetyl-alpha-D-muramoyl-L-alanyl-D-glutamyl-meso-2,6-diaminopimeloyl-D-alanyl-D-alanine + UDP-N-acetyl-alpha-D-glucosamine = di-trans,octa-cis-undecaprenyl diphospho-[N-acetyl-alpha-D-glucosaminyl-(1-&gt;4)]-N-acetyl-alpha-D-muramoyl-L-alanyl-D-glutamyl-meso-2,6-diaminopimeloyl-D-alanyl-D-alanine + UDP + H(+). Its pathway is cell wall biogenesis; peptidoglycan biosynthesis. In terms of biological role, cell wall formation. Catalyzes the transfer of a GlcNAc subunit on undecaprenyl-pyrophosphoryl-MurNAc-pentapeptide (lipid intermediate I) to form undecaprenyl-pyrophosphoryl-MurNAc-(pentapeptide)GlcNAc (lipid intermediate II). This Neisseria gonorrhoeae (strain ATCC 700825 / FA 1090) protein is UDP-N-acetylglucosamine--N-acetylmuramyl-(pentapeptide) pyrophosphoryl-undecaprenol N-acetylglucosamine transferase.